We begin with the raw amino-acid sequence, 264 residues long: Cell division protein DivIB (264 aa).

Residues 1-23 are Cytoplasmic-facing; sequence MAVYEERIPQVKQQRPRRRGNRK. The helical transmembrane segment at 24–44 threads the bilayer; the sequence is LVFLLVLFFLTILIIVFIRSP. The Extracellular portion of the chain corresponds to 45 to 264; that stretch reads YSKVQEIRVT…GQEQPQQPQQ (220 aa). The POTRA domain maps to 46–114; that stretch reads SKVQEIRVTG…GLITLHITEQ (69 aa).

The protein belongs to the FtsQ/DivIB family. DivIB subfamily.

It is found in the cell membrane. In terms of biological role, cell division protein that may be involved in stabilizing or promoting the assembly of the division complex. This is Cell division protein DivIB from Brevibacillus brevis (strain 47 / JCM 6285 / NBRC 100599).